Consider the following 499-residue polypeptide: Cytochrome P450 11B1, mitochondrial (499 aa).

The transit peptide at 1-24 directs the protein to the mitochondrion; sequence MALRVTADVWLARPWQCLHRTRAL. Cys446 is a binding site for heme.

Belongs to the cytochrome P450 family. Requires heme as cofactor. As to expression, adrenal zona fasciculata/reticularis.

It localises to the mitochondrion inner membrane. The catalysed reaction is a steroid + 2 reduced [adrenodoxin] + O2 + 2 H(+) = an 11beta-hydroxysteroid + 2 oxidized [adrenodoxin] + H2O. It catalyses the reaction 21-hydroxyprogesterone + 2 reduced [adrenodoxin] + O2 + 2 H(+) = corticosterone + 2 oxidized [adrenodoxin] + H2O. It carries out the reaction 21-hydroxyprogesterone + 2 reduced [adrenodoxin] + O2 + 2 H(+) = 18-hydroxy-11-deoxycorticosterone + 2 oxidized [adrenodoxin] + H2O. The enzyme catalyses 21-hydroxyprogesterone + 2 reduced [adrenodoxin] + O2 + 2 H(+) = 19-hydroxy-11-deoxycorticosterone + 2 oxidized [adrenodoxin] + H2O. The catalysed reaction is 11-deoxycortisol + 2 reduced [adrenodoxin] + O2 + 2 H(+) = cortisol + 2 oxidized [adrenodoxin] + H2O. It catalyses the reaction cortisol + 2 reduced [adrenodoxin] + O2 + 2 H(+) = 18-hydroxycortisol + 2 oxidized [adrenodoxin] + H2O. It carries out the reaction 11-deoxycortisol + 2 reduced [adrenodoxin] + O2 + 2 H(+) = 18-hydroxy-11-deoxycortisol + 2 oxidized [adrenodoxin] + H2O. It participates in steroid biosynthesis; glucocorticoid biosynthesis. Its pathway is steroid hormone biosynthesis. A cytochrome P450 monooxygenase involved in the biosynthesis of adrenal corticoids. Catalyzes a variety of reactions that are essential for many species, including detoxification, defense, and the formation of endogenous chemicals like steroid hormones. Steroid 11beta, 18- and 19-hydroxylase with preferred regioselectivity at 11beta, then 18, and lastly 19. Catalyzes the hydroxylation of 11-deoxycortisol and 11-deoxycorticosterone (21-hydroxyprogesterone) at 11beta position, yielding cortisol or corticosterone, respectively, but cannot produce aldosterone. Mechanistically, uses molecular oxygen inserting one oxygen atom into a substrate for hydroxylation and reducing the second into a water molecule. Two electrons are provided by NADPH via a two-protein mitochondrial transfer system comprising flavoprotein FDXR (adrenodoxin/ferredoxin reductase) and nonheme iron-sulfur protein FDX1 or FDX2 (adrenodoxin/ferredoxin). Due to its lack of 18-oxidation activity, it is incapable of generating aldosterone. Could also be involved in the androgen metabolic pathway. The chain is Cytochrome P450 11B1, mitochondrial (Cyp11b1) from Rattus norvegicus (Rat).